The sequence spans 568 residues: Nucleoprotein (568 aa).

Residues 54–240 are binding site for the cap structure m7GTP; the sequence is MRKEKRDDSD…IDGNKSAINI (187 aa). Positions 388 and 390 each coordinate Mn(2+). Residues Glu398, Cys505, His508, and Cys528 each coordinate Zn(2+). Asp532 contacts Mn(2+).

This sequence belongs to the arenaviridae nucleocapsid protein family. In terms of assembly, homomultimerizes to form the nucleocapsid. Binds to viral genomic RNA. Interacts with glycoprotein G2. Interacts with protein Z; this interaction probably directs the encapsidated genome to budding sites. Interacts with protein L; this interaction does not interfere with Z-L interaction. Interacts with host IKBKE (via Protein kinase domain); the interaction inhibits IKBKE kinase activity.

It is found in the virion. Its subcellular location is the host cytoplasm. Functionally, encapsidates the genome, protecting it from nucleases. The encapsidated genomic RNA is termed the nucleocapsid (NC). Serves as template for viral transcription and replication. The increased presence of protein N in host cell does not seem to trigger the switch from transcription to replication as observed in other negative strain RNA viruses. Through the interaction with host IKBKE, strongly inhibits the phosphorylation and nuclear translocation of host IRF3, a protein involved in interferon activation pathway, leading to the inhibition of interferon-beta and IRF3-dependent promoters activation. Also encodes a functional 3'-5' exoribonuclease that degrades preferentially dsRNA substrates and thereby participates in the suppression of interferon induction. The sequence is that of Nucleoprotein from Praomys (African soft-furred rats).